Reading from the N-terminus, the 205-residue chain is Thiamine-phosphate synthase (205 aa).

4-amino-2-methyl-5-(diphosphooxymethyl)pyrimidine contacts are provided by residues 37–41 and Asn-69; that span reads QVREK. Mg(2+) is bound by residues Asp-70 and Asp-89. A 4-amino-2-methyl-5-(diphosphooxymethyl)pyrimidine-binding site is contributed by Ser-108. Position 134-136 (134-136) interacts with 2-[(2R,5Z)-2-carboxy-4-methylthiazol-5(2H)-ylidene]ethyl phosphate; that stretch reads TGS. Lys-137 contacts 4-amino-2-methyl-5-(diphosphooxymethyl)pyrimidine. 2-[(2R,5Z)-2-carboxy-4-methylthiazol-5(2H)-ylidene]ethyl phosphate contacts are provided by residues Gly-165 and 185-186; that span reads IS.

Belongs to the thiamine-phosphate synthase family. The cofactor is Mg(2+).

It carries out the reaction 2-[(2R,5Z)-2-carboxy-4-methylthiazol-5(2H)-ylidene]ethyl phosphate + 4-amino-2-methyl-5-(diphosphooxymethyl)pyrimidine + 2 H(+) = thiamine phosphate + CO2 + diphosphate. The enzyme catalyses 2-(2-carboxy-4-methylthiazol-5-yl)ethyl phosphate + 4-amino-2-methyl-5-(diphosphooxymethyl)pyrimidine + 2 H(+) = thiamine phosphate + CO2 + diphosphate. It catalyses the reaction 4-methyl-5-(2-phosphooxyethyl)-thiazole + 4-amino-2-methyl-5-(diphosphooxymethyl)pyrimidine + H(+) = thiamine phosphate + diphosphate. Its pathway is cofactor biosynthesis; thiamine diphosphate biosynthesis; thiamine phosphate from 4-amino-2-methyl-5-diphosphomethylpyrimidine and 4-methyl-5-(2-phosphoethyl)-thiazole: step 1/1. Condenses 4-methyl-5-(beta-hydroxyethyl)thiazole monophosphate (THZ-P) and 2-methyl-4-amino-5-hydroxymethyl pyrimidine pyrophosphate (HMP-PP) to form thiamine monophosphate (TMP). The sequence is that of Thiamine-phosphate synthase from Clostridium botulinum (strain 657 / Type Ba4).